The following is a 657-amino-acid chain: Hemocyanin (657 aa).

A glycan (N-linked (GlcNAc...) asparagine) is linked at N167. Cu cation is bound by residues H194, H198, H224, H344, H348, and H384. Intrachain disulfides connect C483/C502 and C562/C609.

Belongs to the tyrosinase family. Hemocyanin subfamily. In terms of assembly, it consists of at least four very similar subunits. As to expression, hemolymph.

It localises to the secreted. Its subcellular location is the extracellular space. In terms of biological role, hemocyanins are copper-containing oxygen carriers occurring freely dissolved in the hemolymph of many mollusks and arthropods. This Palinurus vulgaris (European spiny lobster) protein is Hemocyanin.